Consider the following 350-residue polypeptide: Phosphate acyltransferase (350 aa).

It belongs to the PlsX family. In terms of assembly, homodimer. Probably interacts with PlsY.

It is found in the cytoplasm. It catalyses the reaction a fatty acyl-[ACP] + phosphate = an acyl phosphate + holo-[ACP]. Its pathway is lipid metabolism; phospholipid metabolism. Functionally, catalyzes the reversible formation of acyl-phosphate (acyl-PO(4)) from acyl-[acyl-carrier-protein] (acyl-ACP). This enzyme utilizes acyl-ACP as fatty acyl donor, but not acyl-CoA. This chain is Phosphate acyltransferase, found in Magnetococcus marinus (strain ATCC BAA-1437 / JCM 17883 / MC-1).